Here is a 727-residue protein sequence, read N- to C-terminus: NADH-ubiquinone oxidoreductase 75 kDa subunit, mitochondrial (727 aa).

A mitochondrion-targeting transit peptide spans 1–23 (MLRIPVRKALVVLSKSPKGCVRT). The 79-residue stretch at 30 to 108 (NLIEVFVDGQ…GWNILTNSKK (79 aa)) folds into the 2Fe-2S ferredoxin-type domain. Cysteine 64, cysteine 75, and cysteine 78 together coordinate [2Fe-2S] cluster. At lysine 84 the chain carries N6-acetyllysine. Residue cysteine 92 coordinates [2Fe-2S] cluster. A 4Fe-4S His(Cys)3-ligated-type domain is found at 108 to 147 (KSKKAREGVMEFLLANHPLDCPICDQGGECDLQDQSMMFG). Residues histidine 124, cysteine 128, cysteine 131, cysteine 137, cysteine 176, cysteine 179, cysteine 182, and cysteine 226 each coordinate [4Fe-4S] cluster. The 4Fe-4S Mo/W bis-MGD-type domain occupies 245-301 (TRKTESIDVMDAVGSNIVVSTRTGEVMRILPRMHEDINEEWISDKTRFAYDGLKRQR). Lysine 467, lysine 499, and lysine 709 each carry N6-acetyllysine.

The protein belongs to the complex I 75 kDa subunit family. As to quaternary structure, core subunit of respiratory chain NADH dehydrogenase (Complex I) which is composed of 45 different subunits. This is the largest subunit of complex I and it is a component of the iron-sulfur (IP) fragment of the enzyme. Complex I associates with ubiquinol-cytochrome reductase complex (Complex III) to form supercomplexes. Interacts with MDM2 and AKAP1. Requires [2Fe-2S] cluster as cofactor. [4Fe-4S] cluster is required as a cofactor.

Its subcellular location is the mitochondrion inner membrane. It catalyses the reaction a ubiquinone + NADH + 5 H(+)(in) = a ubiquinol + NAD(+) + 4 H(+)(out). In terms of biological role, core subunit of the mitochondrial membrane respiratory chain NADH dehydrogenase (Complex I) which catalyzes electron transfer from NADH through the respiratory chain, using ubiquinone as an electron acceptor. Essential for catalysing the entry and efficient transfer of electrons within complex I. Plays a key role in the assembly and stability of complex I and participates in the association of complex I with ubiquinol-cytochrome reductase complex (Complex III) to form supercomplexes. This chain is NADH-ubiquinone oxidoreductase 75 kDa subunit, mitochondrial (NDUFS1), found in Pan troglodytes (Chimpanzee).